The chain runs to 310 residues: Homoserine kinase (310 aa).

An ATP-binding site is contributed by 91–101 (PIGSGLGSSAC).

This sequence belongs to the GHMP kinase family. Homoserine kinase subfamily.

It localises to the cytoplasm. It carries out the reaction L-homoserine + ATP = O-phospho-L-homoserine + ADP + H(+). The protein operates within amino-acid biosynthesis; L-threonine biosynthesis; L-threonine from L-aspartate: step 4/5. Functionally, catalyzes the ATP-dependent phosphorylation of L-homoserine to L-homoserine phosphate. The protein is Homoserine kinase of Escherichia coli O157:H7.